Consider the following 129-residue polypeptide: Glycine cleavage system H protein (129 aa).

The Lipoyl-binding domain occupies 22–103; that stretch reads TGTVGITDYA…AHTAWIMKIE (82 aa). Lys-63 is modified (N6-lipoyllysine).

The protein belongs to the GcvH family. As to quaternary structure, the glycine cleavage system is composed of four proteins: P, T, L and H. It depends on (R)-lipoate as a cofactor.

Its function is as follows. The glycine cleavage system catalyzes the degradation of glycine. The H protein shuttles the methylamine group of glycine from the P protein to the T protein. The chain is Glycine cleavage system H protein from Acidobacterium capsulatum (strain ATCC 51196 / DSM 11244 / BCRC 80197 / JCM 7670 / NBRC 15755 / NCIMB 13165 / 161).